Reading from the N-terminus, the 168-residue chain is Crossover junction endodeoxyribonuclease RuvC (168 aa).

Catalysis depends on residues Asp-7, Glu-66, and Asp-138. 3 residues coordinate Mg(2+): Asp-7, Glu-66, and Asp-138.

It belongs to the RuvC family. As to quaternary structure, homodimer which binds Holliday junction (HJ) DNA. The HJ becomes 2-fold symmetrical on binding to RuvC with unstacked arms; it has a different conformation from HJ DNA in complex with RuvA. In the full resolvosome a probable DNA-RuvA(4)-RuvB(12)-RuvC(2) complex forms which resolves the HJ. Requires Mg(2+) as cofactor.

It is found in the cytoplasm. It catalyses the reaction Endonucleolytic cleavage at a junction such as a reciprocal single-stranded crossover between two homologous DNA duplexes (Holliday junction).. Functionally, the RuvA-RuvB-RuvC complex processes Holliday junction (HJ) DNA during genetic recombination and DNA repair. Endonuclease that resolves HJ intermediates. Cleaves cruciform DNA by making single-stranded nicks across the HJ at symmetrical positions within the homologous arms, yielding a 5'-phosphate and a 3'-hydroxyl group; requires a central core of homology in the junction. The consensus cleavage sequence is 5'-(A/T)TT(C/G)-3'. Cleavage occurs on the 3'-side of the TT dinucleotide at the point of strand exchange. HJ branch migration catalyzed by RuvA-RuvB allows RuvC to scan DNA until it finds its consensus sequence, where it cleaves and resolves the cruciform DNA. This Cereibacter sphaeroides (strain ATCC 17023 / DSM 158 / JCM 6121 / CCUG 31486 / LMG 2827 / NBRC 12203 / NCIMB 8253 / ATH 2.4.1.) (Rhodobacter sphaeroides) protein is Crossover junction endodeoxyribonuclease RuvC.